A 52-amino-acid polypeptide reads, in one-letter code: Teratocyte protein CftICK-I (52 aa).

The signal sequence occupies residues 1–19; it reads MYKLCILFLVVIFAVMAIA. Cystine bridges form between C22-C37, C29-C41, and C36-C51.

Abundantly expressed by teratocytes, which are extra-embryonic cells released by parasitoid wasps into their hosts during larval eclosion.

The protein localises to the secreted. In terms of biological role, this endoparasitoid wasp peptide has immununosuppressive, antimicrobial and insecticidal activities. Suppress cellular immunity which is detectable as a reduction of hemocyte encapsulation in the host. Shows potent antifungal activity against C.albicans (MIC~0.25 ug/ml). In vivo, ingestion of this peptide (probably at excessive doses) increases larval mortality and reduces leaf consumption of D.saccharalis, a permissive host for C.flavipes. The chain is Teratocyte protein CftICK-I from Cotesia flavipes (Parasitic wasp).